The primary structure comprises 279 residues: Virginiamycin B lyase (279 aa).

Position 215 (His215) interacts with substrate. Glu253 serves as a coordination point for Mg(2+). The active-site Proton acceptor is His255. Glu270 contacts Mg(2+).

It belongs to the Vgb family. In terms of assembly, monomer. The cofactor is Mg(2+).

Functionally, inactivates the type B streptogramin antibiotics by linearizing the lactone ring at the ester linkage, generating a free phenylglycine carboxylate and converting the threonyl moiety into 2-amino-butenoic acid. The polypeptide is Virginiamycin B lyase (Nocardia farcinica (strain IFM 10152)).